We begin with the raw amino-acid sequence, 281 residues long: Bifunctional protein FolD (281 aa).

NADP(+)-binding positions include 167–169 (GRS) and Ser192.

This sequence belongs to the tetrahydrofolate dehydrogenase/cyclohydrolase family. Homodimer.

It catalyses the reaction (6R)-5,10-methylene-5,6,7,8-tetrahydrofolate + NADP(+) = (6R)-5,10-methenyltetrahydrofolate + NADPH. The enzyme catalyses (6R)-5,10-methenyltetrahydrofolate + H2O = (6R)-10-formyltetrahydrofolate + H(+). The protein operates within one-carbon metabolism; tetrahydrofolate interconversion. Catalyzes the oxidation of 5,10-methylenetetrahydrofolate to 5,10-methenyltetrahydrofolate and then the hydrolysis of 5,10-methenyltetrahydrofolate to 10-formyltetrahydrofolate. This Alcanivorax borkumensis (strain ATCC 700651 / DSM 11573 / NCIMB 13689 / SK2) protein is Bifunctional protein FolD.